Here is a 393-residue protein sequence, read N- to C-terminus: Sister chromatid cohesion protein DCC1 (393 aa).

The protein belongs to the DCC1 family. In terms of assembly, component of the CTF18-RFC complex which consists of CTF8, CTF18, DSCC1 and the RFC complex. Interacts with CTF8 and CTF18. Interacts with DDX11.

The protein resides in the nucleus. In terms of biological role, loads PCNA onto primed templates regulating velocity, spacing and restart activity of replication forks. May couple DNA replication to sister chromatid cohesion through regulation of the acetylation of the cohesin subunit SMC3. The polypeptide is Sister chromatid cohesion protein DCC1 (DSCC1) (Homo sapiens (Human)).